Consider the following 591-residue polypeptide: UvrABC system protein C (591 aa).

The region spanning 14-91 (DSPGCYLHKD…IQKNMPKYNI (78 aa)) is the GIY-YIG domain. In terms of domain architecture, UVR spans 196 to 231 (DKIVTGLKEKMLAASQAMEFERAAEYRDLISGIATL).

This sequence belongs to the UvrC family. In terms of assembly, interacts with UvrB in an incision complex.

It localises to the cytoplasm. In terms of biological role, the UvrABC repair system catalyzes the recognition and processing of DNA lesions. UvrC both incises the 5' and 3' sides of the lesion. The N-terminal half is responsible for the 3' incision and the C-terminal half is responsible for the 5' incision. The protein is UvrABC system protein C of Streptococcus uberis (strain ATCC BAA-854 / 0140J).